Here is a 165-residue protein sequence, read N- to C-terminus: NADH-quinone oxidoreductase subunit I (165 aa).

4Fe-4S ferredoxin-type domains follow at residues 57–86 (RRYD…IESE) and 96–125 (SRYD…ETHI). Positions 66, 69, 72, 76, 105, 108, 111, and 115 each coordinate [4Fe-4S] cluster.

Belongs to the complex I 23 kDa subunit family. As to quaternary structure, NDH-1 is composed of 14 different subunits. Subunits NuoA, H, J, K, L, M, N constitute the membrane sector of the complex. [4Fe-4S] cluster serves as cofactor.

The protein resides in the cell inner membrane. It carries out the reaction a quinone + NADH + 5 H(+)(in) = a quinol + NAD(+) + 4 H(+)(out). NDH-1 shuttles electrons from NADH, via FMN and iron-sulfur (Fe-S) centers, to quinones in the respiratory chain. The immediate electron acceptor for the enzyme in this species is believed to be ubiquinone. Couples the redox reaction to proton translocation (for every two electrons transferred, four hydrogen ions are translocated across the cytoplasmic membrane), and thus conserves the redox energy in a proton gradient. This chain is NADH-quinone oxidoreductase subunit I, found in Polaromonas sp. (strain JS666 / ATCC BAA-500).